The chain runs to 984 residues: Probable translation initiation factor IF-2 (984 aa).

In terms of domain architecture, DOD-type homing endonuclease spans 94–215; sequence VNGWYSVTVT…LPLLLLRFGI (122 aa). The tr-type G domain occupies 391–608; the sequence is TTETHNFVAN…LIAGLSQKYL (218 aa). GTP is bound by residues 464-468 and 518-521; these read DTPGH and NKID.

This sequence belongs to the TRAFAC class translation factor GTPase superfamily. Classic translation factor GTPase family. IF-2 subfamily. Post-translationally, this protein undergoes a protein self splicing that involves a post-translational excision of the intervening region (intein) followed by peptide ligation.

Function in general translation initiation by promoting the binding of the formylmethionine-tRNA to ribosomes. Seems to function along with eIF-2. This is Probable translation initiation factor IF-2 (infB) from Pyrococcus furiosus (strain ATCC 43587 / DSM 3638 / JCM 8422 / Vc1).